Consider the following 27-residue polypeptide: Pyruvate dehydrogenase protein X component, mitochondrial (27 aa).

The interval 1 to 27 is disordered; that stretch reads FRLSPAARNILEKHSLDASQGTATGPR. The 26-residue stretch at 2–27 folds into the Peripheral subunit-binding (PSBD) domain; it reads RLSPAARNILEKHSLDASQGTATGPR. The residue at position 13 (Lys-13) is an N6-acetyllysine. Position 15 is a phosphoserine (Ser-15). A compositionally biased stretch (polar residues) spans 17–27; the sequence is DASQGTATGPR.

This sequence belongs to the 2-oxoacid dehydrogenase family. Part of the inner core of the multimeric pyruvate dehydrogenase complex that is composed of about 48 DLAT and 12 PDHX molecules. This core binds multiple copies of pyruvate dehydrogenase (subunits PDH1A and PDHB, E1), dihydrolipoamide acetyltransferase (DLAT, E2) and lipoamide dehydrogenase (DLD, E3). Interacts with SIRT4. Interacts with DLD.

The protein resides in the mitochondrion matrix. Functionally, required for anchoring dihydrolipoamide dehydrogenase (E3) to the dihydrolipoamide transacetylase (E2) core of the pyruvate dehydrogenase complexes of eukaryotes. This specific binding is essential for a functional PDH complex. This chain is Pyruvate dehydrogenase protein X component, mitochondrial, found in Mesocricetus auratus (Golden hamster).